Reading from the N-terminus, the 520-residue chain is Arabinose import ATP-binding protein AraG (520 aa).

The span at 1 to 10 (MTTQTMTAVS) shows a compositional bias: polar residues. Residues 1 to 27 (MTTQTMTAVSGNDGDTGGDAAESPPGG) are disordered. ABC transporter domains lie at 30 to 265 (LALD…MVGR) and 265 to 516 (RSIE…LIKL). 62–69 (GENGAGKS) contacts ATP.

Belongs to the ABC transporter superfamily. Arabinose importer (TC 3.A.1.2.2) family. As to quaternary structure, the complex is composed of two ATP-binding proteins (AraG), two transmembrane proteins (AraH) and a solute-binding protein (AraF).

The protein resides in the cell inner membrane. It carries out the reaction L-arabinose(out) + ATP + H2O = L-arabinose(in) + ADP + phosphate + H(+). Functionally, part of the ABC transporter complex AraFGH involved in L-arabinose import. Responsible for energy coupling to the transport system. This Azospirillum brasilense protein is Arabinose import ATP-binding protein AraG.